A 688-amino-acid polypeptide reads, in one-letter code: Translation initiation factor IF-2 (688 aa).

The interval 62–103 (EFEVEEKVVRSKKNSNKKKKKGKGNEDKRQDNFAGRQQTQIV) is disordered. Residues 71-83 (RSKKNSNKKKKKG) are compositionally biased toward basic residues. A tr-type G domain is found at 190–359 (ERPAVVTIMG…LLVSEVEEYK (170 aa)). The segment at 199–206 (GHVDHGKT) is G1. Residue 199–206 (GHVDHGKT) coordinates GTP. The tract at residues 224-228 (GITQH) is G2. Residues 245-248 (DTPG) form a G3 region. Residues 245–249 (DTPGH) and 299–302 (NKMD) each bind GTP. The interval 299–302 (NKMD) is G4. The tract at residues 335 to 337 (SAI) is G5.

Belongs to the TRAFAC class translation factor GTPase superfamily. Classic translation factor GTPase family. IF-2 subfamily.

It localises to the cytoplasm. One of the essential components for the initiation of protein synthesis. Protects formylmethionyl-tRNA from spontaneous hydrolysis and promotes its binding to the 30S ribosomal subunits. Also involved in the hydrolysis of GTP during the formation of the 70S ribosomal complex. The protein is Translation initiation factor IF-2 of Bacillus cereus (strain G9842).